A 57-amino-acid chain; its full sequence is uncharacterized protein (57 aa).

This is an uncharacterized protein from Escherichia coli (strain K12).